We begin with the raw amino-acid sequence, 262 residues long: Phosphonates import ATP-binding protein PhnC (262 aa).

One can recognise an ABC transporter domain in the interval 5–253 (IRVEKLAKTF…RFDHLYRSIN (249 aa)). An ATP-binding site is contributed by 37-44 (GPSGSGKS).

This sequence belongs to the ABC transporter superfamily. Phosphonates importer (TC 3.A.1.9.1) family. As to quaternary structure, the complex is composed of two ATP-binding proteins (PhnC), two transmembrane proteins (PhnE) and a solute-binding protein (PhnD).

It localises to the cell inner membrane. It carries out the reaction phosphonate(out) + ATP + H2O = phosphonate(in) + ADP + phosphate + H(+). Its function is as follows. Part of the ABC transporter complex PhnCDE involved in phosphonates, phosphate esters, phosphite and phosphate import. Responsible for energy coupling to the transport system. The polypeptide is Phosphonates import ATP-binding protein PhnC (Escherichia coli (strain K12)).